The following is a 287-amino-acid chain: tRNA-cytidine(32) 2-sulfurtransferase (287 aa).

The PP-loop motif signature appears at 39–44; it reads SGGKDS. Positions 114, 117, and 205 each coordinate [4Fe-4S] cluster.

This sequence belongs to the TtcA family. In terms of assembly, homodimer. Mg(2+) is required as a cofactor. Requires [4Fe-4S] cluster as cofactor.

The protein localises to the cytoplasm. It carries out the reaction cytidine(32) in tRNA + S-sulfanyl-L-cysteinyl-[cysteine desulfurase] + AH2 + ATP = 2-thiocytidine(32) in tRNA + L-cysteinyl-[cysteine desulfurase] + A + AMP + diphosphate + H(+). Its pathway is tRNA modification. Its function is as follows. Catalyzes the ATP-dependent 2-thiolation of cytidine in position 32 of tRNA, to form 2-thiocytidine (s(2)C32). The sulfur atoms are provided by the cysteine/cysteine desulfurase (IscS) system. The chain is tRNA-cytidine(32) 2-sulfurtransferase from Dechloromonas aromatica (strain RCB).